The chain runs to 589 residues: ATP-dependent lipid A-core flippase (589 aa).

A run of 5 helical transmembrane segments spans residues 29–49, 68–88, 157–177, 254–274, and 283–303; these read WLLVVAACGALLEAVAGSTFL, ALWLPLGIVGLFLLRGIAGYI, VIGALVVMLWYSWTVTLAILL, ISSAAVQLLGAVGLAMLLLIA, and LSPGDFVSLMTSMIAVIPALK. One can recognise an ABC transmembrane type-1 domain in the interval 32–314; it reads VVAACGALLE…LTNVQNMLQS (283 aa). An ABC transporter domain is found at 346 to 582; sequence IEFRGITARY…DGLYAYLYSM (237 aa). An ATP-binding site is contributed by 380-387; the sequence is GRSGSGKS.

Belongs to the ABC transporter superfamily. Lipid exporter (TC 3.A.1.106) family. As to quaternary structure, homodimer.

Its subcellular location is the cell inner membrane. The catalysed reaction is ATP + H2O + lipid A-core oligosaccharideSide 1 = ADP + phosphate + lipid A-core oligosaccharideSide 2.. Functionally, involved in lipopolysaccharide (LPS) biosynthesis. Translocates lipid A-core from the inner to the outer leaflet of the inner membrane. Transmembrane domains (TMD) form a pore in the inner membrane and the ATP-binding domain (NBD) is responsible for energy generation. This Xylella fastidiosa (strain Temecula1 / ATCC 700964) protein is ATP-dependent lipid A-core flippase.